We begin with the raw amino-acid sequence, 253 residues long: LexA repressor (253 aa).

The segment at 1-34 (MAIEKKPAGARGSRGSRTVKTLPNGKPDPASLSD) is disordered. The H-T-H motif DNA-binding region spans 56-76 (IREIGDAAGLQSTSSVAYQLK). The segment covering 82–106 (GFLRRDPNKPRAVDVRHLPETESRS) has biased composition (basic and acidic residues). Residues 82 to 127 (GFLRRDPNKPRAVDVRHLPETESRSSKAATQAKSKAPQAGAHDPEL) are disordered. The segment covering 107–120 (SKAATQAKSKAPQA) has biased composition (low complexity). Active-site for autocatalytic cleavage activity residues include S177 and K214.

The protein belongs to the peptidase S24 family. Homodimer.

It carries out the reaction Hydrolysis of Ala-|-Gly bond in repressor LexA.. Represses a number of genes involved in the response to DNA damage (SOS response), including recA and lexA. In the presence of single-stranded DNA, RecA interacts with LexA causing an autocatalytic cleavage which disrupts the DNA-binding part of LexA, leading to derepression of the SOS regulon and eventually DNA repair. This Corynebacterium glutamicum (strain R) protein is LexA repressor.